A 98-amino-acid polypeptide reads, in one-letter code: Co-chaperonin GroES (98 aa).

This sequence belongs to the GroES chaperonin family. In terms of assembly, heptamer of 7 subunits arranged in a ring. Interacts with the chaperonin GroEL.

Its subcellular location is the cytoplasm. Functionally, together with the chaperonin GroEL, plays an essential role in assisting protein folding. The GroEL-GroES system forms a nano-cage that allows encapsulation of the non-native substrate proteins and provides a physical environment optimized to promote and accelerate protein folding. GroES binds to the apical surface of the GroEL ring, thereby capping the opening of the GroEL channel. The sequence is that of Co-chaperonin GroES from Coprothermobacter proteolyticus (strain ATCC 35245 / DSM 5265 / OCM 4 / BT).